The following is a 537-amino-acid chain: ATP synthase subunit beta 1 (537 aa).

ATP is bound at residue 164–171; the sequence is GGAGVGKT. The segment at 471–537 is disordered; sequence PKQSATEKNS…ESLEEPQNGR (67 aa). Polar residues-rich tracts occupy residues 473–498 and 507–528; these read QSAT…SPGP and IPSS…AQNE.

Belongs to the ATPase alpha/beta chains family. F-type ATPases have 2 components, CF(1) - the catalytic core - and CF(0) - the membrane proton channel. CF(1) has five subunits: alpha(3), beta(3), gamma(1), delta(1), epsilon(1). CF(0) has three main subunits: a(1), b(2) and c(9-12). The alpha and beta chains form an alternating ring which encloses part of the gamma chain. CF(1) is attached to CF(0) by a central stalk formed by the gamma and epsilon chains, while a peripheral stalk is formed by the delta and b chains.

Its subcellular location is the cell inner membrane. The catalysed reaction is ATP + H2O + 4 H(+)(in) = ADP + phosphate + 5 H(+)(out). Produces ATP from ADP in the presence of a proton gradient across the membrane. The catalytic sites are hosted primarily by the beta subunits. This Pseudoalteromonas atlantica (strain T6c / ATCC BAA-1087) protein is ATP synthase subunit beta 1.